Consider the following 616-residue polypeptide: Chaperone protein HscA (616 aa).

The protein belongs to the heat shock protein 70 family.

Its function is as follows. Chaperone involved in the maturation of iron-sulfur cluster-containing proteins. Has a low intrinsic ATPase activity which is markedly stimulated by HscB. Involved in the maturation of IscU. This is Chaperone protein HscA from Pectobacterium carotovorum subsp. carotovorum (strain PC1).